The sequence spans 273 residues: UPF0380 protein YfjQ (273 aa).

The protein belongs to the UPF0380 family.

In Escherichia coli (strain K12), this protein is UPF0380 protein YfjQ (yfjQ).